A 199-amino-acid polypeptide reads, in one-letter code: 3-isopropylmalate dehydratase small subunit (199 aa).

It belongs to the LeuD family. LeuD type 1 subfamily. As to quaternary structure, heterodimer of LeuC and LeuD.

The catalysed reaction is (2R,3S)-3-isopropylmalate = (2S)-2-isopropylmalate. The protein operates within amino-acid biosynthesis; L-leucine biosynthesis; L-leucine from 3-methyl-2-oxobutanoate: step 2/4. In terms of biological role, catalyzes the isomerization between 2-isopropylmalate and 3-isopropylmalate, via the formation of 2-isopropylmaleate. This is 3-isopropylmalate dehydratase small subunit from Mycobacteroides abscessus (strain ATCC 19977 / DSM 44196 / CCUG 20993 / CIP 104536 / JCM 13569 / NCTC 13031 / TMC 1543 / L948) (Mycobacterium abscessus).